A 258-amino-acid chain; its full sequence is Undecaprenyl-diphosphatase (258 aa).

8 helical membrane-spanning segments follow: residues 1–21, 42–62, 69–89, 96–116, 135–155, 173–193, 211–231, and 237–257; these read MDFL…FLPV, LKCF…FMFF, FNLW…GFLA, FFEP…FIVV, VSFK…IPGT, EVAA…ATAY, IFLV…KLFL, and FSYI…LIYI.

It belongs to the UppP family.

It is found in the cell inner membrane. The enzyme catalyses di-trans,octa-cis-undecaprenyl diphosphate + H2O = di-trans,octa-cis-undecaprenyl phosphate + phosphate + H(+). In terms of biological role, catalyzes the dephosphorylation of undecaprenyl diphosphate (UPP). Confers resistance to bacitracin. The protein is Undecaprenyl-diphosphatase of Campylobacter fetus subsp. fetus (strain 82-40).